A 515-amino-acid polypeptide reads, in one-letter code: Fatty acyl-CoA reductase 1 (515 aa).

Topologically, residues 1 to 465 (MVSIPEYYEG…ARKHLNKLRN (465 aa)) are cytoplasmic. The segment at 451-507 (SGLPAARKHLNKLRNIRYGFNTILVILIWRIFIARSQMARNIWYFVVSLCYKFLSYF) is necessary and sufficient for PEX19-mediated localization into peroxisome membrane. Residues 466 to 483 (IRYGFNTILVILIWRIFI) traverse the membrane as a helical segment. The Peroxisomal segment spans residues 484-515 (ARSQMARNIWYFVVSLCYKFLSYFRASSTMRY).

It belongs to the fatty acyl-CoA reductase family. Interacts with PEX19; PEX19 mediates the targeting of FAR1 to peroxisomes. Widely expressed. Expressed in all tissues examined. Highest expression seen in preputial gland. Expressed in the brain where large quantities of ether lipids are synthesized.

Its subcellular location is the peroxisome membrane. The catalysed reaction is a long-chain fatty acyl-CoA + 2 NADPH + 2 H(+) = a long-chain primary fatty alcohol + 2 NADP(+) + CoA. It carries out the reaction hexadecanoyl-CoA + 2 NADPH + 2 H(+) = hexadecan-1-ol + 2 NADP(+) + CoA. The enzyme catalyses octadecanoyl-CoA + 2 NADPH + 2 H(+) = octadecan-1-ol + 2 NADP(+) + CoA. It catalyses the reaction (9Z)-octadecenoyl-CoA + 2 NADPH + 2 H(+) = (9Z)-octadecen-1-ol + 2 NADP(+) + CoA. The catalysed reaction is (9Z,12Z)-octadecadienoyl-CoA + 2 NADPH + 2 H(+) = (9Z,12Z)-octadecadien-1-ol + 2 NADP(+) + CoA. It carries out the reaction eicosanoyl-CoA + 2 NADPH + 2 H(+) = eicosan-1-ol + 2 NADP(+) + CoA. The enzyme catalyses 16-methylheptadecanoyl-CoA + 2 NADPH + 2 H(+) = 16-methylheptadecan-1-ol + 2 NADP(+) + CoA. It catalyses the reaction 18-methylnonadecanoyl-CoA + 2 NADPH + 2 H(+) = 18-methylnonadecan-1-ol + 2 NADP(+) + CoA. In terms of biological role, catalyzes the reduction of saturated and unsaturated C16 or C18 fatty acyl-CoA to fatty alcohols. It plays an essential role in the production of ether lipids/plasmalogens which synthesis requires fatty alcohols. In parallel, it is also required for wax monoesters production since fatty alcohols also constitute a substrate for their synthesis. In Mus musculus (Mouse), this protein is Fatty acyl-CoA reductase 1.